A 519-amino-acid polypeptide reads, in one-letter code: Lysine histidine transporter-like 8 (519 aa).

The segment at 1 to 44 (MDERPETELISIPATPRVSTPEILTPSGQRSPRPATKPSSATWT) is disordered. Residues 1–114 (MDERPETELI…NLNAGVGFQA (114 aa)) are Cytoplasmic-facing. Helical transmembrane passes span 115–135 (LVLPVAFAFLGWSWGILSLTI) and 136–156 (AYCWQLYTLWILVQLHEAVPG). Topologically, residues 157-176 (KRYNRYVELAQAAFGERLGV) are cytoplasmic. A helical membrane pass occupies residues 177–197 (WLALFPTVYLSAGTATALILI). Residues 198 to 217 (GGETMKLFFQIVCGPLCTSN) are Extracellular-facing. Residues 218-238 (PLTTVEWYLVFTSLCIVLSQL) form a helical membrane-spanning segment. The Cytoplasmic portion of the chain corresponds to 239–243 (PNLNS). Residues 244–264 (IAGLSLIGAVTAITYSTMVWV) traverse the membrane as a helical segment. At 265-282 (LSVSQPRPATISYEPLSM) the chain is on the extracellular side. The chain crosses the membrane as a helical span at residues 283–303 (PSTSGSLFAVLNALGIIAFAF). The Cytoplasmic segment spans residues 304-333 (RGHNLVLEIQSTMPSTFKHPAHVPMWRGAK). A helical membrane pass occupies residues 334–354 (ISYFLIALCIFPISIGGFWAY). Topologically, residues 355-377 (GNLMPSGGMLAALYAFHIHDIPR) are extracellular. A helical transmembrane segment spans residues 378-398 (GLLATAFLLVVFSCLSSFQIY). Over 399–427 (SMPAFDSFEAGYTSRTNKPCSIWVRSGFR) the chain is Cytoplasmic. Residues 428–448 (VFFGFVSFFIGVALPFLSSLA) traverse the membrane as a helical segment. Position 449 (Gly-449) is a topological domain, extracellular. The chain crosses the membrane as a helical span at residues 450–470 (LLGGLTLPVTFAYPCFMWVLI). Over 471–485 (KKPAKYSFNWYFHWG) the chain is Cytoplasmic. The chain crosses the membrane as a helical span at residues 486–506 (LGWLGVAFSLAFSIGGIWSMV). At 507 to 519 (TNGLKLKFFKPPN) the chain is on the extracellular side.

The protein belongs to the amino acid/polyamine transporter 2 family. Amino acid/auxin permease (AAAP) (TC 2.A.18.2) subfamily.

It is found in the cell membrane. Its function is as follows. Amino acid transporter. This is Lysine histidine transporter-like 8 (AATL1) from Arabidopsis thaliana (Mouse-ear cress).